Here is a 308-residue protein sequence, read N- to C-terminus: Protein translocase subunit SecF (308 aa).

The next 6 membrane-spanning stretches (helical) occupy residues 28-48, 140-160, 164-184, 194-214, 246-266, and 272-292; these read SIIL…NFGI, IEAG…YIWV, WYFG…ALGF, LSTI…SVVI, ILTV…GGEA, and VLVF…SAPI.

It belongs to the SecD/SecF family. SecF subfamily. In terms of assembly, forms a complex with SecD. Part of the essential Sec protein translocation apparatus which comprises SecA, SecYEG and auxiliary proteins SecDF-YajC and YidC.

Its subcellular location is the cell inner membrane. Its function is as follows. Part of the Sec protein translocase complex. Interacts with the SecYEG preprotein conducting channel. SecDF uses the proton motive force (PMF) to complete protein translocation after the ATP-dependent function of SecA. The chain is Protein translocase subunit SecF from Rickettsia felis (strain ATCC VR-1525 / URRWXCal2) (Rickettsia azadi).